Consider the following 74-residue polypeptide: MLVLSRKVNESIQIGPDIEIKVIAIEGEQVKLGIEAPQHVDIHRKEIYLSILEENNRAVSFNTDLLLNLSSQKK.

This sequence belongs to the CsrA/RsmA family. In terms of assembly, homodimer; the beta-strands of each monomer intercalate to form a hydrophobic core, while the alpha-helices form wings that extend away from the core.

The protein resides in the cytoplasm. Functionally, a translational regulator that binds mRNA to regulate translation initiation and/or mRNA stability. Usually binds in the 5'-UTR at or near the Shine-Dalgarno sequence preventing ribosome-binding, thus repressing translation. Its main target seems to be the major flagellin gene, while its function is anatagonized by FliW. The protein is Translational regulator CsrA of Bacillus velezensis (strain DSM 23117 / BGSC 10A6 / LMG 26770 / FZB42) (Bacillus amyloliquefaciens subsp. plantarum).